Reading from the N-terminus, the 142-residue chain is Natriuretic peptides A (142 aa).

The N-terminal stretch at 1 to 23 (MMLKTVIYTGVLFLICNKVLVRA) is a signal peptide. Residues 24–112 (DPLYSPYSSK…RLRDLLMAPR (89 aa)) constitute a propeptide that is removed on maturation. Positions 47-123 (DTLGQDEGND…NRGSSGCFGS (77 aa)) are disordered. The segment covering 77–94 (WDRERERQWPASDYKKPQ) has biased composition (basic and acidic residues). A disulfide bridge connects residues C120 and C136.

This sequence belongs to the natriuretic peptide family. In terms of processing, cleaved upon secretion to produce the functional hormone. In terms of tissue distribution, expressed in heart atrium and to a lower extent in heart ventricle, but not in brain.

The protein localises to the secreted. Its function is as follows. Hormone playing a key role in cardiovascular homeostasis through regulation of natriuresis, diuresis, and vasodilation. Has a cGMP-stimulating activity. This chain is Natriuretic peptides A (nppa), found in Acipenser transmontanus (White sturgeon).